The sequence spans 163 residues: Lipoprotein signal peptidase (163 aa).

3 helical membrane-spanning segments follow: residues 4–24, 66–86, and 92–112; these read SAAL…LLIL, LDAW…AWLW, and DHQF…GNII. Catalysis depends on residues Asp122 and Asp140. A helical transmembrane segment spans residues 132-152; the sequence is SFAVFNLADSLITIGAGFILL.

Belongs to the peptidase A8 family.

The protein localises to the cell inner membrane. It catalyses the reaction Release of signal peptides from bacterial membrane prolipoproteins. Hydrolyzes -Xaa-Yaa-Zaa-|-(S,diacylglyceryl)Cys-, in which Xaa is hydrophobic (preferably Leu), and Yaa (Ala or Ser) and Zaa (Gly or Ala) have small, neutral side chains.. It participates in protein modification; lipoprotein biosynthesis (signal peptide cleavage). Its function is as follows. This protein specifically catalyzes the removal of signal peptides from prolipoproteins. This chain is Lipoprotein signal peptidase, found in Allorhizobium ampelinum (strain ATCC BAA-846 / DSM 112012 / S4) (Agrobacterium vitis (strain S4)).